The primary structure comprises 87 residues: Cell division topological specificity factor (87 aa).

It belongs to the MinE family.

Functionally, prevents the cell division inhibition by proteins MinC and MinD at internal division sites while permitting inhibition at polar sites. This ensures cell division at the proper site by restricting the formation of a division septum at the midpoint of the long axis of the cell. This is Cell division topological specificity factor from Blochmanniella pennsylvanica (strain BPEN).